Here is a 742-residue protein sequence, read N- to C-terminus: Cullin-2 (742 aa).

The Cullin neddylation domain occupies 672-734 (DRRYAIDAAL…RDYLERDTDN (63 aa)). Lys686 participates in a covalent cross-link: Glycyl lysine isopeptide (Lys-Gly) (interchain with G-Cter in NEDD8).

Belongs to the cullin family. In terms of assembly, interacts with SKIP17 and FBW2/SKIP18. In terms of processing, neddylated; which enhances the ubiquitination activity of E3 ubiquitin-protein ligase complexes.

In terms of biological role, core component of multiple SCF (SKP1-CUL1-F-box protein) E3 ubiquitin-protein ligase complexes. Involved in ubiquitination and subsequent proteasomal degradation of target proteins. The polypeptide is Cullin-2 (CUL2) (Arabidopsis thaliana (Mouse-ear cress)).